The primary structure comprises 116 residues: Ribosome-binding factor A (116 aa).

It belongs to the RbfA family. As to quaternary structure, monomer. Binds 30S ribosomal subunits, but not 50S ribosomal subunits or 70S ribosomes.

Its subcellular location is the cytoplasm. In terms of biological role, one of several proteins that assist in the late maturation steps of the functional core of the 30S ribosomal subunit. Associates with free 30S ribosomal subunits (but not with 30S subunits that are part of 70S ribosomes or polysomes). Required for efficient processing of 16S rRNA. May interact with the 5'-terminal helix region of 16S rRNA. This chain is Ribosome-binding factor A, found in Streptococcus mutans serotype c (strain ATCC 700610 / UA159).